The primary structure comprises 107 residues: Large ribosomal subunit protein uL24 (107 aa).

This sequence belongs to the universal ribosomal protein uL24 family. As to quaternary structure, part of the 50S ribosomal subunit.

Its function is as follows. One of two assembly initiator proteins, it binds directly to the 5'-end of the 23S rRNA, where it nucleates assembly of the 50S subunit. In terms of biological role, one of the proteins that surrounds the polypeptide exit tunnel on the outside of the subunit. The chain is Large ribosomal subunit protein uL24 from Solidesulfovibrio magneticus (strain ATCC 700980 / DSM 13731 / RS-1) (Desulfovibrio magneticus).